The following is a 518-amino-acid chain: Xaa-Pro aminopeptidase 3 (518 aa).

Residues Met-1 to Tyr-48 constitute a mitochondrion transit peptide. Substrate is bound by residues Tyr-314, Asp-345, Asp-356, His-434, His-441, Glu-461, and Glu-485. Mn(2+)-binding residues include Asp-345, Asp-356, and His-434. 2 residues coordinate Mn(2+): Glu-461 and Glu-485.

This sequence belongs to the peptidase M24B family. In terms of assembly, homodimer. It depends on Mn(2+) as a cofactor.

It is found in the mitochondrion. It localises to the cytoplasm. The enzyme catalyses Release of any N-terminal amino acid, including proline, that is linked to proline, even from a dipeptide or tripeptide.. In terms of biological role, catalyzes the removal of a penultimate prolyl residue from the N-termini of peptides, such as Leu-Pro-Ala. Also shows low activity towards peptides with Ala or Ser at the P1 position. The polypeptide is Xaa-Pro aminopeptidase 3 (xpnpep3) (Dictyostelium discoideum (Social amoeba)).